The primary structure comprises 246 residues: tRNA (guanine-N(7)-)-methyltransferase (246 aa).

S-adenosyl-L-methionine is bound by residues glutamate 77, glutamate 102, aspartate 129, and aspartate 152. The active site involves aspartate 152. Residues lysine 156, aspartate 188, and 225–228 contribute to the substrate site; that span reads TKFE.

This sequence belongs to the class I-like SAM-binding methyltransferase superfamily. TrmB family.

The catalysed reaction is guanosine(46) in tRNA + S-adenosyl-L-methionine = N(7)-methylguanosine(46) in tRNA + S-adenosyl-L-homocysteine. It participates in tRNA modification; N(7)-methylguanine-tRNA biosynthesis. Its function is as follows. Catalyzes the formation of N(7)-methylguanine at position 46 (m7G46) in tRNA. This is tRNA (guanine-N(7)-)-methyltransferase from Haemophilus influenzae (strain PittGG).